The following is a 480-amino-acid chain: Type VI lipase adapter protein Tla3 (480 aa).

The interval Ile410–Gly458 is disordered.

In terms of assembly, interacts with the Tle3 toxin on one side and with the H2-T6SS component VgrG2b on the other side.

The protein localises to the cytoplasm. Functionally, adapter protein that targets and loads the Tle3 toxin onto the H2 type VI secretion system (H2-T6SS) machinery through an interaction with the TTR domain of VgrG2b. Seems specific for Tle3. This chain is Type VI lipase adapter protein Tla3, found in Pseudomonas aeruginosa (strain ATCC 15692 / DSM 22644 / CIP 104116 / JCM 14847 / LMG 12228 / 1C / PRS 101 / PAO1).